Here is a 1024-residue protein sequence, read N- to C-terminus: Beta-galactosidase (1024 aa).

Residues Asn-103 and Asp-202 each coordinate substrate. Asp-202 provides a ligand contact to Na(+). Positions 417, 419, and 462 each coordinate Mg(2+). Residues Glu-462 and 538-541 (EYAH) each bind substrate. The active-site Proton donor is the Glu-462. Glu-538 acts as the Nucleophile in catalysis. A Mg(2+)-binding site is contributed by Asn-598. Positions 602 and 605 each coordinate Na(+). Positions 605 and 1000 each coordinate substrate.

It belongs to the glycosyl hydrolase 2 family. In terms of assembly, homotetramer. It depends on Mg(2+) as a cofactor. The cofactor is Na(+).

The enzyme catalyses Hydrolysis of terminal non-reducing beta-D-galactose residues in beta-D-galactosides.. This Escherichia coli (strain UTI89 / UPEC) protein is Beta-galactosidase.